We begin with the raw amino-acid sequence, 107 residues long: U1-lycotoxin-Ls1p (107 aa).

The N-terminal stretch at M1–S20 is a signal peptide. Residues E21–R41 constitute a propeptide that is removed on maturation. 4 disulfide bridges follow: C44/C59, C51/C68, C58/C86, and C70/C84.

Belongs to the neurotoxin 19 (CSTX) family. 04 (U1-Lctx) subfamily. In terms of tissue distribution, expressed by the venom gland.

The protein resides in the secreted. This Lycosa singoriensis (Wolf spider) protein is U1-lycotoxin-Ls1p.